The chain runs to 509 residues: Ribonuclease Y (509 aa).

Residues 5–25 traverse the membrane as a helical segment; the sequence is IIILLSVFCGIFFICFIICSS. One can recognise a KH domain in the interval 199 to 259; sequence TTNIVKLPSD…IRREIATRTL (61 aa). The HD domain occupies 325–418; that stretch reads VLAHSIEVAK…VAIADSISAS (94 aa).

This sequence belongs to the RNase Y family.

The protein resides in the cell membrane. Functionally, endoribonuclease that initiates mRNA decay. This Mycoplasma mycoides subsp. mycoides SC (strain CCUG 32753 / NCTC 10114 / PG1) protein is Ribonuclease Y.